A 261-amino-acid polypeptide reads, in one-letter code: Imidazole glycerol phosphate synthase subunit HisF (261 aa).

Active-site residues include Asp16 and Asp135.

This sequence belongs to the HisA/HisF family. Heterodimer of HisH and HisF.

It localises to the cytoplasm. It catalyses the reaction 5-[(5-phospho-1-deoxy-D-ribulos-1-ylimino)methylamino]-1-(5-phospho-beta-D-ribosyl)imidazole-4-carboxamide + L-glutamine = D-erythro-1-(imidazol-4-yl)glycerol 3-phosphate + 5-amino-1-(5-phospho-beta-D-ribosyl)imidazole-4-carboxamide + L-glutamate + H(+). The protein operates within amino-acid biosynthesis; L-histidine biosynthesis; L-histidine from 5-phospho-alpha-D-ribose 1-diphosphate: step 5/9. Its function is as follows. IGPS catalyzes the conversion of PRFAR and glutamine to IGP, AICAR and glutamate. The HisF subunit catalyzes the cyclization activity that produces IGP and AICAR from PRFAR using the ammonia provided by the HisH subunit. The sequence is that of Imidazole glycerol phosphate synthase subunit HisF from Mycolicibacterium gilvum (strain PYR-GCK) (Mycobacterium gilvum (strain PYR-GCK)).